A 219-amino-acid chain; its full sequence is uncharacterized protein (219 aa).

The chain crosses the membrane as a helical span at residues 13-32 (VFGLFLFSLIFFGLLSLATF).

It localises to the membrane. This is an uncharacterized protein from Aquifex aeolicus (strain VF5).